The chain runs to 512 residues: Probable metalloreductase AIM14 (512 aa).

The next 7 membrane-spanning stretches (helical) occupy residues 20–40 (IKYGYIVLGFSVVHIIGILIC), 61–81 (PLFISIIAWTLILIGLGVFHV), 97–117 (MSYALLPFDIFLVLRPNSIGL), 132–152 (VIIAGAIIHGVGYFIKWILEG), 161–181 (LWNFLGIVVFMLNLILIIISL), 191–211 (YFYVVHNITVWLFVGLICLHA), and 218–235 (YAIACASLLGLQIFERYA). Positions 94 to 206 (FGRMSYALLP…NITVWLFVGL (113 aa)) constitute a Ferric oxidoreductase domain. The FAD-binding FR-type domain maps to 230-355 (IFERYAKSHS…GGSGISFALP (126 aa)). Over residues 427 to 436 (ESLPSSETPS) the composition is skewed to low complexity. The interval 427 to 451 (ESLPSSETPSRTVNDDSLSQDTRPK) is disordered. The span at 437 to 447 (RTVNDDSLSQD) shows a compositional bias: polar residues.

It belongs to the ferric reductase (FRE) family. AIM14 subfamily.

It is found in the membrane. Functionally, probable cell surface metalloreductase. May be involved in iron or copper homeostasis. This Debaryomyces hansenii (strain ATCC 36239 / CBS 767 / BCRC 21394 / JCM 1990 / NBRC 0083 / IGC 2968) (Yeast) protein is Probable metalloreductase AIM14 (AIM14).